We begin with the raw amino-acid sequence, 320 residues long: Protein U25 (320 aa).

This sequence belongs to the herpesviridae US22 family.

This Human herpesvirus 7 (strain JI) (HHV-7) protein is Protein U25 (U25).